The sequence spans 106 residues: Iron-sulfur cluster assembly protein CyaY (106 aa).

The protein belongs to the frataxin family.

Functionally, involved in iron-sulfur (Fe-S) cluster assembly. May act as a regulator of Fe-S biogenesis. In Salmonella schwarzengrund (strain CVM19633), this protein is Iron-sulfur cluster assembly protein CyaY.